We begin with the raw amino-acid sequence, 110 residues long: Nucleoid-associated protein YpAngola_A2890 (110 aa).

Residues 90–110 (KEKMASVSNGMQLPPGFKMPF) are disordered.

The protein belongs to the YbaB/EbfC family. As to quaternary structure, homodimer.

The protein localises to the cytoplasm. The protein resides in the nucleoid. Its function is as follows. Binds to DNA and alters its conformation. May be involved in regulation of gene expression, nucleoid organization and DNA protection. This Yersinia pestis bv. Antiqua (strain Angola) protein is Nucleoid-associated protein YpAngola_A2890.